The primary structure comprises 477 residues: MSAAPGLLHQELSCPLCLQLFDAPVTAECGHSFCRACLSRVAGEPAADGTVNCPCCQAPTRPQALSTNLQLARLVEGLAQVPQGHCEEHLDPLSIYCEQDRVLVCGVCASLGSHRGHRLLPAAEAHSRLKTQLPQQKLQLQEASMRKEKSVAVLEHQLTEVEETVRQFRGAVGEQLGKMRVFLAALEGSLDREAERVRSEAGVALRRELGGLHSYLEQLRQMEKVLEEVADKPQTEFLMKYCLVTSRLQKILAESPPPARLDIQLPIISDDFKFQVWRKMFRALMPALEELTFDPSSAHPSLVVSPTGRRVECSEQKAPPAGDDARQFDKAVAVVAQQLLSDGEHYWEVEVGDKPRWALGVMASEASRRGRLHAVPSQGLWLLGLRDGKTLEAHVEAKEPRALRTPERRPTRLGLYLSFGDGVLAFYDASDADALELLFAFRERLPGPVYPFFDVCWHDKGKNAQPLLLVGPDGQEA.

The Zn(2+) site is built by Cys14, Cys17, Cys29, His31, Cys34, Cys37, Cys53, Cys56, Cys86, His89, Cys97, Asp100, Cys105, Cys108, His114, and His117. The RING-type zinc-finger motif lies at 14-57 (CPLCLQLFDAPVTAECGHSFCRACLSRVAGEPAADGTVNCPCCQ). The B box-type zinc finger occupies 81–122 (VPQGHCEEHLDPLSIYCEQDRVLVCGVCASLGSHRGHRLLPA). Positions 135–232 (QQKLQLQEAS…EKVLEEVADK (98 aa)) form a coiled coil. Phosphoserine is present on Ser255. The region spanning 271-475 (DFKFQVWRKM…PLLLVGPDGQ (205 aa)) is the B30.2/SPRY domain.

This sequence belongs to the TRIM/RBCC family. In terms of assembly, homodimer. Homooligomer; disulfide-linked. Oligomerizes on the phospholipid membrane. Interacts with DYSF and CAV3. Post-translationally, disulfide bond formation at Cys-242 occurs in case of membrane damage that cause the entry of the oxidized milieu of the extracellular space, resulting in homooligomerization. As to expression, muscle-specific.

Its subcellular location is the cell membrane. The protein resides in the sarcolemma. It localises to the cytoplasmic vesicle membrane. The catalysed reaction is S-ubiquitinyl-[E2 ubiquitin-conjugating enzyme]-L-cysteine + [acceptor protein]-L-lysine = [E2 ubiquitin-conjugating enzyme]-L-cysteine + N(6)-ubiquitinyl-[acceptor protein]-L-lysine.. The protein operates within protein modification; protein ubiquitination. Specifically binds phosphatidylserine. The binding to phospholipids enhances ubiquitination activity. In terms of biological role, muscle-specific E3 ubiquitin-protein ligase that plays a central role in cell membrane repair by nucleating the assembly of the repair machinery at injury sites. Its ubiquitination activity is mediated by E2 ubiquitin-conjugating enzymes UBE2D1, UBE2D2 and UBE2D3. Acts as a sensor of oxidation: upon membrane damage, entry of extracellular oxidative environment results in disulfide bond formation and homooligomerization at the injury site. This oligomerization acts as a nucleation site for recruitment of TRIM72-containing vesicles to the injury site, leading to membrane patch formation. Probably acts upstream of the Ca(2+)-dependent membrane resealing process. Required for transport of DYSF to sites of cell injury during repair patch formation. Regulates membrane budding and exocytosis. May be involved in the regulation of the mobility of KCNB1-containing endocytic vesicles. In Oryctolagus cuniculus (Rabbit), this protein is Tripartite motif-containing protein 72.